The primary structure comprises 415 residues: Protein PIN-LIKES 4 (415 aa).

At 1–13 (MKLLELFIASSKP) the chain is on the lumenal side. Residues 14 to 34 (VVETLLITSVGFYLALDTVNL) form a helical membrane-spanning segment. Residues 35 to 44 (LGHDARKHLN) lie on the Cytoplasmic side of the membrane. The chain crosses the membrane as a helical span at residues 45 to 61 (NIVFYVFSPSLIGSRLA). Topologically, residues 62–75 (DSVTYESLVKMWFM) are lumenal. A helical membrane pass occupies residues 76–96 (PVNVLLTFMIGSLLGWIVIVI). Over 97–106 (TKPPSQLRGL) the chain is Cytoplasmic. A helical transmembrane segment spans residues 107 to 127 (IISCCASGNLGTMPLIIIPAI). At 128–143 (CKEKGGPFGDSESCEK) the chain is on the lumenal side. A helical membrane pass occupies residues 144 to 161 (YGMGYVTLSMTAFFISVY). At 162-244 (KHDTNWYVSG…RVVSLSKKVN (83 aa)) the chain is on the cytoplasmic side. A helical transmembrane segment spans residues 245–265 (LGSIFAPATIAAIIALVIGLI). Topologically, residues 266–285 (TPLRNLIIGTVAPFRVIQDS) are lumenal. The helical transmembrane segment at 286-306 (LTLLGDGAIPAMTLILGGNLL) threads the bilayer. Residues 307 to 322 (KGMRRSEVRSSEMKNS) lie on the Cytoplasmic side of the membrane. Residues 323-343 (CIIGVLVARYILLPVSGVLLV) traverse the membrane as a helical segment. The Lumenal portion of the chain corresponds to 344-355 (RGAYKLDLVTSE). A helical transmembrane segment spans residues 356 to 376 (PLYQFVLLLQYAVPPAMNLGT). Residues 377-389 (KTQLFGAGESECS) lie on the Cytoplasmic side of the membrane. A helical transmembrane segment spans residues 390-410 (VIMLWTYSLAAVSLTVWPTFF). Topologically, residues 411–415 (MWLVT) are lumenal.

This sequence belongs to the auxin efflux carrier (TC 2.A.69.2) family. In terms of tissue distribution, expressed in seedlings, rosette and cauline leaves, stems, flowers and siliques.

It is found in the endoplasmic reticulum membrane. In terms of biological role, involved in cellular auxin homeostasis by regulating auxin metabolism. Regulates intracellular auxin accumulation at the endoplasmic reticulum and thus auxin availability for nuclear auxin signaling. This chain is Protein PIN-LIKES 4, found in Arabidopsis thaliana (Mouse-ear cress).